Consider the following 695-residue polypeptide: NADPH--cytochrome P450 reductase (695 aa).

At M1–D8 the chain is on the lumenal side. A helical membrane pass occupies residues L9 to V31. The Cytoplasmic segment spans residues P32–S695. Residues C66–W221 enclose the Flavodoxin-like domain. FMN-binding positions include S72–A77, A123–G126, L169–Q178, and D204. Positions H277–P538 constitute an FAD-binding FR-type domain. R296 is an NADP(+) binding site. FAD is bound by residues R451–S454, T469–V471, and G486–T489. Residues T552, S614–R615, K620–Q624, and E656 each bind NADP(+). An FAD-binding site is contributed by W694.

The protein belongs to the NADPH--cytochrome P450 reductase family. In the N-terminal section; belongs to the flavodoxin family. It in the C-terminal section; belongs to the flavoprotein pyridine nucleotide cytochrome reductase family. FAD serves as cofactor. It depends on FMN as a cofactor.

It localises to the endoplasmic reticulum membrane. The protein localises to the mitochondrion outer membrane. The protein resides in the cell membrane. It carries out the reaction 2 oxidized [cytochrome P450] + NADPH = 2 reduced [cytochrome P450] + NADP(+) + H(+). Its function is as follows. This enzyme is required for electron transfer from NADP to cytochrome P450 in microsomes. It can also provide electron transfer to heme oxygenase and cytochrome B5. Involved in ergosterol biosynthesis. The chain is NADPH--cytochrome P450 reductase from Aspergillus terreus (strain NIH 2624 / FGSC A1156).